The primary structure comprises 74 residues: Small ribosomal subunit protein bS18 (74 aa).

This sequence belongs to the bacterial ribosomal protein bS18 family. As to quaternary structure, part of the 30S ribosomal subunit. Forms a tight heterodimer with protein bS6.

Functionally, binds as a heterodimer with protein bS6 to the central domain of the 16S rRNA, where it helps stabilize the platform of the 30S subunit. The protein is Small ribosomal subunit protein bS18 of Chlorobaculum tepidum (strain ATCC 49652 / DSM 12025 / NBRC 103806 / TLS) (Chlorobium tepidum).